We begin with the raw amino-acid sequence, 291 residues long: Porphobilinogen deaminase (291 aa).

Cys-237 bears the S-(dipyrrolylmethanemethyl)cysteine mark.

Belongs to the HMBS family. As to quaternary structure, monomer. The cofactor is dipyrromethane.

The catalysed reaction is 4 porphobilinogen + H2O = hydroxymethylbilane + 4 NH4(+). It participates in porphyrin-containing compound metabolism; protoporphyrin-IX biosynthesis; coproporphyrinogen-III from 5-aminolevulinate: step 2/4. Its function is as follows. Tetrapolymerization of the monopyrrole PBG into the hydroxymethylbilane pre-uroporphyrinogen in several discrete steps. The polypeptide is Porphobilinogen deaminase (Clostridium perfringens (strain SM101 / Type A)).